A 442-amino-acid polypeptide reads, in one-letter code: Putative helicase 161L (442 aa).

Residues 88–241 form the Helicase ATP-binding domain; that stretch reads IDILEKNHSV…LFPIFFGKEK (154 aa). 101 to 108 contacts ATP; the sequence is CFTGFGKT. The DEAH box motif lies at 194 to 197; the sequence is DEVH.

Belongs to the DEAD box helicase family. DEAH subfamily.

This chain is Putative helicase 161L, found in Invertebrate iridescent virus 6 (IIV-6).